The primary structure comprises 284 residues: MDPILLDGKKLSEKIRNEIRREIEERKTKNLRIPKLATILVGNNPASETYVSMKIKACHGVGMGSEMIRLGEQTTTEELLSVIDKLNADPNVDGILLQHPSPSQIDERAAFDRISFRKDVDGVTTLSFGKLSMGVETYLPCTPYGIVLLLKEHGINVSGKNAVVVGRSPILGKPMAMLLTEMNATVTLCHSKTQNLPEIVRLADIVVGAVGKPEFIKADWISKGAVLLDAGYNPGNVGDIEISKAKNHSSFYTPVPGGVGPMTIAVLLLQTLYSSKEHFTPPVQ.

NADP(+) is bound by residues 166-168 (GRS) and S191.

The protein belongs to the tetrahydrofolate dehydrogenase/cyclohydrolase family. Homodimer.

It carries out the reaction (6R)-5,10-methylene-5,6,7,8-tetrahydrofolate + NADP(+) = (6R)-5,10-methenyltetrahydrofolate + NADPH. The catalysed reaction is (6R)-5,10-methenyltetrahydrofolate + H2O = (6R)-10-formyltetrahydrofolate + H(+). It functions in the pathway one-carbon metabolism; tetrahydrofolate interconversion. In terms of biological role, catalyzes the oxidation of 5,10-methylenetetrahydrofolate to 5,10-methenyltetrahydrofolate and then the hydrolysis of 5,10-methenyltetrahydrofolate to 10-formyltetrahydrofolate. The chain is Bifunctional protein FolD from Leptospira borgpetersenii serovar Hardjo-bovis (strain JB197).